The sequence spans 139 residues: ATP synthase epsilon chain (139 aa).

The protein belongs to the ATPase epsilon chain family. In terms of assembly, F-type ATPases have 2 components, CF(1) - the catalytic core - and CF(0) - the membrane proton channel. CF(1) has five subunits: alpha(3), beta(3), gamma(1), delta(1), epsilon(1). CF(0) has three main subunits: a, b and c.

It localises to the cell inner membrane. Functionally, produces ATP from ADP in the presence of a proton gradient across the membrane. The polypeptide is ATP synthase epsilon chain (Acinetobacter baylyi (strain ATCC 33305 / BD413 / ADP1)).